A 129-amino-acid chain; its full sequence is MSSQPSKDLETFENPQPGRDYTIRIRVPEFTCLCPKTGQPDFATLFLDYVPRARCVELKSLKLYVWAFRDQGAFHEKVTNEILNDLVAATDPNFMRLTAEFNVRGGVYTTVVAEHRHPDWQPPVPVTLP.

The Thioimide intermediate role is filled by C34. The Proton donor role is filled by D41. Residues 56 to 58 (VEL) and 75 to 76 (HE) each bind substrate.

This sequence belongs to the GTP cyclohydrolase I family. QueF type 1 subfamily.

The protein localises to the cytoplasm. It carries out the reaction 7-aminomethyl-7-carbaguanine + 2 NADP(+) = 7-cyano-7-deazaguanine + 2 NADPH + 3 H(+). The protein operates within tRNA modification; tRNA-queuosine biosynthesis. Functionally, catalyzes the NADPH-dependent reduction of 7-cyano-7-deazaguanine (preQ0) to 7-aminomethyl-7-deazaguanine (preQ1). The protein is NADPH-dependent 7-cyano-7-deazaguanine reductase of Thioalkalivibrio sulfidiphilus (strain HL-EbGR7).